A 594-amino-acid polypeptide reads, in one-letter code: UvrABC system protein C (594 aa).

The GIY-YIG domain maps to aspartate 14 to isoleucine 91. One can recognise a UVR domain in the interval aspartate 196 to methionine 231.

The protein belongs to the UvrC family. Interacts with UvrB in an incision complex.

The protein localises to the cytoplasm. Functionally, the UvrABC repair system catalyzes the recognition and processing of DNA lesions. UvrC both incises the 5' and 3' sides of the lesion. The N-terminal half is responsible for the 3' incision and the C-terminal half is responsible for the 5' incision. The chain is UvrABC system protein C from Streptococcus equi subsp. zooepidemicus (strain H70).